A 306-amino-acid chain; its full sequence is Porphobilinogen deaminase (306 aa).

Cys239 is subject to S-(dipyrrolylmethanemethyl)cysteine.

This sequence belongs to the HMBS family. In terms of assembly, monomer. Dipyrromethane serves as cofactor.

It carries out the reaction 4 porphobilinogen + H2O = hydroxymethylbilane + 4 NH4(+). It functions in the pathway porphyrin-containing compound metabolism; protoporphyrin-IX biosynthesis; coproporphyrinogen-III from 5-aminolevulinate: step 2/4. In terms of biological role, tetrapolymerization of the monopyrrole PBG into the hydroxymethylbilane pre-uroporphyrinogen in several discrete steps. The polypeptide is Porphobilinogen deaminase (hemC) (Helicobacter pylori (strain ATCC 700392 / 26695) (Campylobacter pylori)).